The following is a 476-amino-acid chain: Bifunctional protein GlmU (476 aa).

Positions 1–235 (MTALDIIIMA…ALQVAGVNSP (235 aa)) are pyrophosphorylase. UDP-N-acetyl-alpha-D-glucosamine-binding positions include Lys-23, Gln-81, 86–87 (GT), 108–110 (SGD), Gly-145, Glu-160, and Asn-233. Mg(2+) is bound at residue Asp-110. Asn-233 contributes to the Mg(2+) binding site. Residues 236 to 256 (AQLADLERAHQRAQAAALMEQ) are linker. Positions 257–476 (GVRLADPARF…WKRPAKQAKG (220 aa)) are N-acetyltransferase. UDP-N-acetyl-alpha-D-glucosamine-binding residues include Arg-351 and Lys-369. His-381 acts as the Proton acceptor in catalysis. Tyr-384 and Asn-395 together coordinate UDP-N-acetyl-alpha-D-glucosamine. Residues Ala-398, 404 to 405 (NY), Ser-423, Gly-441, and Arg-458 each bind acetyl-CoA.

The protein in the N-terminal section; belongs to the N-acetylglucosamine-1-phosphate uridyltransferase family. In the C-terminal section; belongs to the transferase hexapeptide repeat family. In terms of assembly, homotrimer. The cofactor is Mg(2+).

It is found in the cytoplasm. It catalyses the reaction alpha-D-glucosamine 1-phosphate + acetyl-CoA = N-acetyl-alpha-D-glucosamine 1-phosphate + CoA + H(+). The catalysed reaction is N-acetyl-alpha-D-glucosamine 1-phosphate + UTP + H(+) = UDP-N-acetyl-alpha-D-glucosamine + diphosphate. Its pathway is nucleotide-sugar biosynthesis; UDP-N-acetyl-alpha-D-glucosamine biosynthesis; N-acetyl-alpha-D-glucosamine 1-phosphate from alpha-D-glucosamine 6-phosphate (route II): step 2/2. It functions in the pathway nucleotide-sugar biosynthesis; UDP-N-acetyl-alpha-D-glucosamine biosynthesis; UDP-N-acetyl-alpha-D-glucosamine from N-acetyl-alpha-D-glucosamine 1-phosphate: step 1/1. The protein operates within bacterial outer membrane biogenesis; LPS lipid A biosynthesis. In terms of biological role, catalyzes the last two sequential reactions in the de novo biosynthetic pathway for UDP-N-acetylglucosamine (UDP-GlcNAc). The C-terminal domain catalyzes the transfer of acetyl group from acetyl coenzyme A to glucosamine-1-phosphate (GlcN-1-P) to produce N-acetylglucosamine-1-phosphate (GlcNAc-1-P), which is converted into UDP-GlcNAc by the transfer of uridine 5-monophosphate (from uridine 5-triphosphate), a reaction catalyzed by the N-terminal domain. The chain is Bifunctional protein GlmU from Acidovorax sp. (strain JS42).